Consider the following 1180-residue polypeptide: DNA-directed RNA polymerase subunit beta (1180 aa).

Belongs to the RNA polymerase beta chain family. As to quaternary structure, the RNAP catalytic core consists of 2 alpha, 1 beta, 1 beta' and 1 omega subunit. When a sigma factor is associated with the core the holoenzyme is formed, which can initiate transcription.

The enzyme catalyses RNA(n) + a ribonucleoside 5'-triphosphate = RNA(n+1) + diphosphate. Its function is as follows. DNA-dependent RNA polymerase catalyzes the transcription of DNA into RNA using the four ribonucleoside triphosphates as substrates. This Macrococcus caseolyticus (strain JCSC5402) (Macrococcoides caseolyticum) protein is DNA-directed RNA polymerase subunit beta.